The following is a 337-amino-acid chain: Phenylalanine--tRNA ligase alpha subunit (337 aa).

Glu-252 serves as a coordination point for Mg(2+).

Belongs to the class-II aminoacyl-tRNA synthetase family. Phe-tRNA synthetase alpha subunit type 1 subfamily. In terms of assembly, tetramer of two alpha and two beta subunits. Mg(2+) is required as a cofactor.

It is found in the cytoplasm. The enzyme catalyses tRNA(Phe) + L-phenylalanine + ATP = L-phenylalanyl-tRNA(Phe) + AMP + diphosphate + H(+). The polypeptide is Phenylalanine--tRNA ligase alpha subunit (Francisella tularensis subsp. novicida (strain U112)).